The sequence spans 119 residues: MFKKYDKKKLRKKRHLRVRKKIFGTSEVPRLSVYRSEKNIYAQIIDDIKGTTLVSASSVDKDFKGNGSNKEAAKVVGKMIADKAIEKGIKEVVFDRGGYIYHGRVQNLAEGAREGGLQF.

Belongs to the universal ribosomal protein uL18 family. In terms of assembly, part of the 50S ribosomal subunit; part of the 5S rRNA/L5/L18/L25 subcomplex. Contacts the 5S and 23S rRNAs.

This is one of the proteins that bind and probably mediate the attachment of the 5S RNA into the large ribosomal subunit, where it forms part of the central protuberance. In Clostridium kluyveri (strain ATCC 8527 / DSM 555 / NBRC 12016 / NCIMB 10680 / K1), this protein is Large ribosomal subunit protein uL18.